A 1420-amino-acid polypeptide reads, in one-letter code: DNA-directed RNA polymerase subunit beta' (1420 aa).

Residues cysteine 71, cysteine 73, cysteine 86, and cysteine 89 each coordinate Zn(2+). The Mg(2+) site is built by aspartate 461, aspartate 463, and aspartate 465. 4 residues coordinate Zn(2+): cysteine 815, cysteine 889, cysteine 896, and cysteine 899.

This sequence belongs to the RNA polymerase beta' chain family. In terms of assembly, the RNAP catalytic core consists of 2 alpha, 1 beta, 1 beta' and 1 omega subunit. When a sigma factor is associated with the core the holoenzyme is formed, which can initiate transcription. Mg(2+) is required as a cofactor. Requires Zn(2+) as cofactor.

The enzyme catalyses RNA(n) + a ribonucleoside 5'-triphosphate = RNA(n+1) + diphosphate. Functionally, DNA-dependent RNA polymerase catalyzes the transcription of DNA into RNA using the four ribonucleoside triphosphates as substrates. The protein is DNA-directed RNA polymerase subunit beta' of Haemophilus ducreyi (strain 35000HP / ATCC 700724).